We begin with the raw amino-acid sequence, 431 residues long: Beta-lactamase hydrolase-like protein (431 aa).

Residues histidine 212, histidine 214, and histidine 286 each contribute to the Zn(2+) site. Residue aspartate 309 coordinates substrate.

It belongs to the metallo-beta-lactamase superfamily. The cofactor is Zn(2+).

Its function is as follows. Could play a role in cell adherence or biofilm development. In Agrobacterium fabrum (strain C58 / ATCC 33970) (Agrobacterium tumefaciens (strain C58)), this protein is Beta-lactamase hydrolase-like protein.